A 252-amino-acid polypeptide reads, in one-letter code: MSRKPIIAGNWKMNKNPQEARAFVEAVASKLPSTDLVDVAVAAPAVDLVTTIEAAKDSVLKVAAQNCYFENTGAFTGETSPKVLAEMGADYVVIGHSERRDYFHETDEDINKKAKAIFANGLTPIVCCGESLETYEAGKAVEFVGAQVSAALAGLSAEQVASLVLAYEPIWAIGTGKSATQDDAQNMCKAVRDVVAADFGQEVADKVRVQYGGSVKPENVKDYMACPDVDGALVGGASLEAGSFLALLDFLN.

Residue 10–12 (NWK) coordinates substrate. H96 functions as the Electrophile in the catalytic mechanism. Residue E168 is the Proton acceptor of the active site. Substrate contacts are provided by residues G174, S214, and 235–236 (GG).

It belongs to the triosephosphate isomerase family. Homodimer.

It is found in the cytoplasm. It carries out the reaction D-glyceraldehyde 3-phosphate = dihydroxyacetone phosphate. Its pathway is carbohydrate biosynthesis; gluconeogenesis. It participates in carbohydrate degradation; glycolysis; D-glyceraldehyde 3-phosphate from glycerone phosphate: step 1/1. Its function is as follows. Involved in the gluconeogenesis. Catalyzes stereospecifically the conversion of dihydroxyacetone phosphate (DHAP) to D-glyceraldehyde-3-phosphate (G3P). This Streptococcus pyogenes serotype M6 (strain ATCC BAA-946 / MGAS10394) protein is Triosephosphate isomerase.